Reading from the N-terminus, the 88-residue chain is Small ribosomal subunit protein bS18B (88 aa).

This sequence belongs to the bacterial ribosomal protein bS18 family. As to quaternary structure, part of the 30S ribosomal subunit. Forms a tight heterodimer with protein bS6.

Functionally, binds as a heterodimer with protein bS6 to the central domain of the 16S rRNA, where it helps stabilize the platform of the 30S subunit. The polypeptide is Small ribosomal subunit protein bS18B (Roseiflexus castenholzii (strain DSM 13941 / HLO8)).